The chain runs to 373 residues: uncharacterized protein (373 aa).

The CP-type G domain maps to 14-168 (KKIVNKIIDE…LMDTPGVLEM (155 aa)). 117 to 124 (GYPNVGKS) provides a ligand contact to GTP.

The protein belongs to the TRAFAC class YlqF/YawG GTPase family.

This is an uncharacterized protein from Methanocaldococcus jannaschii (strain ATCC 43067 / DSM 2661 / JAL-1 / JCM 10045 / NBRC 100440) (Methanococcus jannaschii).